A 105-amino-acid chain; its full sequence is uncharacterized protein (105 aa).

Positions 58 to 105 (YRKKKPNHSRDNPRINSNLSTNYAQAKSVERSRSNSLNSGPNPLENAT) are disordered. 2 stretches are compositionally biased toward polar residues: residues 71–82 (RINSNLSTNYAQ) and 91–105 (SNSL…ENAT).

It localises to the mitochondrion. This is an uncharacterized protein from Arabidopsis thaliana (Mouse-ear cress).